The primary structure comprises 533 residues: DNA primase large subunit (533 aa).

Residues Cys298, Cys377, Cys393, and Cys433 each coordinate [4Fe-4S] cluster. The tract at residues 466-492 (RQKRANGSAPPKARIRPDIKGHGDRSM) is disordered. A compositionally biased stretch (basic and acidic residues) spans 480–490 (IRPDIKGHGDR).

This sequence belongs to the eukaryotic-type primase large subunit family. As to quaternary structure, heterodimer of a catalytic subunit Prim1 and a regulatory subunit Prim2, also known as the DNA primase complex. Component of the alpha DNA polymerase complex (also known as the alpha DNA polymerase-primase complex) consisting of four subunits: the catalytic subunit PolA1, the regulatory subunit PolA2, and the primase complex subunits Prim1 and Prim2 respectively. PolA1 associates with the DNA primase complex before association with PolA2. [4Fe-4S] cluster serves as cofactor. Expressed in embryos (at protein level).

In terms of biological role, regulatory subunit of the DNA primase complex and component of the DNA polymerase alpha complex (also known as the alpha DNA polymerase-primase complex) which play an essential role in the initiation of DNA synthesis. During the S phase of the cell cycle, the DNA polymerase alpha complex (composed of a catalytic subunit PolA1, an accessory subunit PolA2 and two primase subunits, the catalytic subunit Prim1 and the regulatory subunit Prim2) is recruited to DNA at the replicative forks. The primase subunit of the polymerase alpha complex initiates DNA synthesis by oligomerising short RNA primers on both leading and lagging strands. These primers are initially extended by the polymerase alpha catalytic subunit and subsequently transferred to polymerase delta and polymerase epsilon for processive synthesis on the lagging and leading strand, respectively. In the primase complex, both subunits are necessary for the initial di-nucleotide formation, but the extension of the primer depends only on the catalytic subunit. Stabilizes and modulates the activity of the catalytic subunit. This is DNA primase large subunit from Drosophila melanogaster (Fruit fly).